We begin with the raw amino-acid sequence, 437 residues long: La-related protein 7 homolog (437 aa).

In terms of domain architecture, HTH La-type RNA-binding spans 38–145; it reads SKSPSLTIPK…KRKKKFDNRT (108 aa). The xRRM domain maps to 279–397; the sequence is ELSQSCFLKI…QRSSIDEIKA (119 aa). The segment covering 417–427 has biased composition (basic residues); that stretch reads RRPVSKRKNKA. The tract at residues 417–437 is disordered; that stretch reads RRPVSKRKNKAINKMSTEVKK.

Belongs to the LARP7 family. As to quaternary structure, component of the telomerase holoenzyme complex composed minimally of the catalytic subunit p123 and the telomerase RNA template component. In terms of processing, the mature form of the protein is a protein of 43 kDa, which is derived from a 51 kDa precursor by proteolytic cleavage.

Its subcellular location is the nucleus. It localises to the chromosome. It is found in the telomere. Its function is as follows. RNA-binding protein required for assembly of the holoenzyme telomerase ribonucleoprotein (RNP) complex. Specifically binds telomerase RNA and promotes its assembly with catalytic subunit p123, thereby stimulating enzymatic activity and processivity of p123. Telomerase is a ribonucleoprotein enzyme essential that copies new telomeric repeats onto chromosome ends and functions to maintain cell division. This Euplotes aediculatus (Ciliate) protein is La-related protein 7 homolog.